Reading from the N-terminus, the 428-residue chain is Putative POM121-like protein 1 (428 aa).

5 disordered regions span residues 1-23 (MDSL…RLSP), 36-204 (KESG…KFPL), 254-293 (DCRP…HKSQ), 306-384 (TEVP…PSTL), and 402-428 (GPQP…SCPK). A compositionally biased stretch (basic and acidic residues) spans 44–62 (EQDKDPRVQENPGDQRRVP). Low complexity predominate over residues 106–117 (QTSQTSWTSSCT). Polar residues-rich tracts occupy residues 118-129 (NRNAISSSYSST), 144-155 (SHCQLTLSSSKT), 260-269 (PSHTLSSLAT), 326-347 (FSSS…QVTS), and 403-415 (PQPQ…RGQN). Low complexity predominate over residues 416–428 (QRSQTSRTSSCPK).

This sequence belongs to the POM121 family.

This chain is Putative POM121-like protein 1 (POM121L1P), found in Homo sapiens (Human).